The following is a 195-amino-acid chain: MSEIKLIVGLANPGAEYVQTRHNAGAWYVEELARICGVSLVADSKYFGLTARAVLHGKDVRLLIPTTYMNLSGKAVGALANFFRITPEEILVAHDELDMPPGVAKFKLGGGHGGHNGLKDIIAKLANDKNFYRLRIGIGHPGDKNKVSGYVLGKAPAKEQELINAAVDEAVRSTEILFKEDMVKAMTRLHSFKAE.

Residue tyrosine 17 coordinates tRNA. Histidine 22 functions as the Proton acceptor in the catalytic mechanism. Residues tyrosine 68, asparagine 70, and asparagine 116 each contribute to the tRNA site.

Belongs to the PTH family. As to quaternary structure, monomer.

It is found in the cytoplasm. It carries out the reaction an N-acyl-L-alpha-aminoacyl-tRNA + H2O = an N-acyl-L-amino acid + a tRNA + H(+). Functionally, hydrolyzes ribosome-free peptidyl-tRNAs (with 1 or more amino acids incorporated), which drop off the ribosome during protein synthesis, or as a result of ribosome stalling. Its function is as follows. Catalyzes the release of premature peptidyl moieties from peptidyl-tRNA molecules trapped in stalled 50S ribosomal subunits, and thus maintains levels of free tRNAs and 50S ribosomes. The protein is Peptidyl-tRNA hydrolase of Shewanella oneidensis (strain ATCC 700550 / JCM 31522 / CIP 106686 / LMG 19005 / NCIMB 14063 / MR-1).